We begin with the raw amino-acid sequence, 275 residues long: Taurine transport system permease protein TauC (275 aa).

7 consecutive transmembrane segments (helical) span residues 20 to 42 (LSRQ…WTVA), 87 to 107 (IMLA…AMGL), 124 to 144 (PVPP…GETS), 146 to 166 (ILLI…AGVK), 186 to 206 (VLWF…LRIG), 209 to 229 (VGWS…LGFM), and 236 to 256 (FLAT…AFLL). Residues 80 to 264 (LAASLTRIML…LLELGLRALQ (185 aa)) form the ABC transmembrane type-1 domain.

The protein belongs to the binding-protein-dependent transport system permease family. CysTW subfamily.

Its subcellular location is the cell inner membrane. Its function is as follows. Part of a binding-protein-dependent transport system for taurine. Probably responsible for the translocation of the substrate across the membrane. This is Taurine transport system permease protein TauC (tauC) from Escherichia coli (strain K12).